The sequence spans 109 residues: Small ribosomal subunit protein bS6c (109 aa).

It belongs to the bacterial ribosomal protein bS6 family.

It is found in the plastid. The protein resides in the chloroplast. In terms of biological role, binds together with bS18 to 16S ribosomal RNA. The sequence is that of Small ribosomal subunit protein bS6c from Pyropia yezoensis (Susabi-nori).